We begin with the raw amino-acid sequence, 528 residues long: Na(+)/H(+) antiporter NhaB (528 aa).

10 helical membrane passes run 11–31, 67–87, 98–118, 140–160, 240–260, 311–331, 350–370, 391–411, 449–469, and 476–496; these read VNFLGNSPKWYKLAILSFLVI, PGGLLAIQAVAIGMTSPSQVL, LLLIFMVAGIYFMKQLLLFVF, AFLSAFLDALTVIAVIIAVGI, FFIRMSPVTIPVLLSGLLTCV, LVAGLALHLASVGLIGLSVII, EEALPFTALLAVFFAIVGVII, LVVFFIANGVLSMVSDNVFVG, ATPNGQAAFLFLLTSALAPLI, and MVIMALPYTLVLSIVGIVTIE.

It belongs to the NhaB Na(+)/H(+) (TC 2.A.34) antiporter family.

Its subcellular location is the cell inner membrane. It carries out the reaction 2 Na(+)(in) + 3 H(+)(out) = 2 Na(+)(out) + 3 H(+)(in). Its function is as follows. Na(+)/H(+) antiporter that extrudes sodium in exchange for external protons. In Shewanella denitrificans (strain OS217 / ATCC BAA-1090 / DSM 15013), this protein is Na(+)/H(+) antiporter NhaB.